A 114-amino-acid polypeptide reads, in one-letter code: Iron-sulfur cluster insertion protein ErpA (114 aa).

Iron-sulfur cluster-binding residues include cysteine 42, cysteine 106, and cysteine 108.

This sequence belongs to the HesB/IscA family. Homodimer. Iron-sulfur cluster is required as a cofactor.

Functionally, required for insertion of 4Fe-4S clusters for at least IspG. This Pasteurella multocida (strain Pm70) protein is Iron-sulfur cluster insertion protein ErpA.